Consider the following 125-residue polypeptide: Small ribosomal subunit protein uS12 (125 aa).

Residues 1–31 (MPTINQLVRQGREVETTKSKSPAMQNSPQRR) are disordered. Over residues 19-29 (SKSPAMQNSPQ) the composition is skewed to polar residues. A 3-methylthioaspartic acid modification is found at aspartate 89.

It belongs to the universal ribosomal protein uS12 family. As to quaternary structure, part of the 30S ribosomal subunit. Contacts proteins S8 and S17. May interact with IF1 in the 30S initiation complex.

In terms of biological role, with S4 and S5 plays an important role in translational accuracy. Functionally, interacts with and stabilizes bases of the 16S rRNA that are involved in tRNA selection in the A site and with the mRNA backbone. Located at the interface of the 30S and 50S subunits, it traverses the body of the 30S subunit contacting proteins on the other side and probably holding the rRNA structure together. The combined cluster of proteins S8, S12 and S17 appears to hold together the shoulder and platform of the 30S subunit. This Paracidovorax citrulli (strain AAC00-1) (Acidovorax citrulli) protein is Small ribosomal subunit protein uS12.